Here is a 244-residue protein sequence, read N- to C-terminus: Ureidoacrylate amidohydrolase RutB (244 aa).

Asp38 acts as the Proton acceptor in catalysis. Lys147 is a catalytic residue. Residue Cys180 is the Nucleophile of the active site.

Belongs to the isochorismatase family. RutB subfamily.

The enzyme catalyses (Z)-3-ureidoacrylate + H2O + H(+) = (Z)-3-aminoacrylate + NH4(+) + CO2. It catalyses the reaction (Z)-3-ureidoacrylate + H2O = (Z)-3-aminoacrylate + carbamate + H(+). It carries out the reaction (Z)-2-methylureidoacrylate + H2O + H(+) = (Z)-2-methylaminoacrylate + NH4(+) + CO2. In terms of biological role, hydrolyzes ureidoacrylate to form aminoacrylate and carbamate. The carbamate hydrolyzes spontaneously, thereby releasing one of the nitrogen atoms of the pyrimidine ring as ammonia and one of its carbon atoms as CO2. The protein is Ureidoacrylate amidohydrolase RutB of Shigella sonnei (strain Ss046).